Reading from the N-terminus, the 389-residue chain is Na(+)/H(+) antiporter NhaA (389 aa).

A run of 11 helical transmembrane segments spans residues 24–44 (ILLI…AGPA), 56–76 (LSIE…FVGL), 94–114 (LLPI…HYTL), 122–142 (AGTG…LALL), 152–172 (VFLT…IAMF), 176–196 (QFSL…LVLN), 216–236 (FLML…AFAI), 259–279 (PVAF…VIGS), 291–311 (LGII…LSFV), 326–346 (WTHI…SIFI), and 363–383 (MAIL…LSFF).

It belongs to the NhaA Na(+)/H(+) (TC 2.A.33) antiporter family.

It localises to the cell inner membrane. The catalysed reaction is Na(+)(in) + 2 H(+)(out) = Na(+)(out) + 2 H(+)(in). Na(+)/H(+) antiporter that extrudes sodium in exchange for external protons. This chain is Na(+)/H(+) antiporter NhaA, found in Dechloromonas aromatica (strain RCB).